The sequence spans 1095 residues: Putative patatin-like phospholipase domain-containing protein M110.7 (1095 aa).

The chain crosses the membrane as a helical span at residues 9–29 (LLLIFENILELCMCITLVILI). A disordered region spans residues 75–113 (HKKRSSKEEMTPDKKRDSSEKISKQPPRELFEPNEQEQV). Positions 80 to 105 (SKEEMTPDKKRDSSEKISKQPPRELF) are enriched in basic and acidic residues. A nucleoside 3',5'-cyclic phosphate contacts are provided by residues 144 to 237 (VETL…LTSF), 327 to 416 (RKYE…IQFL), and 450 to 509 (IETG…TVMA). Positions 768 to 935 (IVFGGGGARG…VNNLPADIMR (168 aa)) constitute a PNPLA domain. The GXGXXG signature appears at 772-777 (GGGARG). The short motif at 799-803 (GTSIG) is the GXSXG element. S801 (nucleophile) is an active-site residue. D922 (proton acceptor) is an active-site residue. The short motif at 922 to 924 (DGA) is the DGA/G element.

This sequence belongs to the NTE family.

The protein resides in the membrane. The sequence is that of Putative patatin-like phospholipase domain-containing protein M110.7 from Caenorhabditis elegans.